A 303-amino-acid chain; its full sequence is Methionyl-tRNA formyltransferase (303 aa).

106–109 (SLLP) contributes to the (6S)-5,6,7,8-tetrahydrofolate binding site.

The protein belongs to the Fmt family.

The catalysed reaction is L-methionyl-tRNA(fMet) + (6R)-10-formyltetrahydrofolate = N-formyl-L-methionyl-tRNA(fMet) + (6S)-5,6,7,8-tetrahydrofolate + H(+). Attaches a formyl group to the free amino group of methionyl-tRNA(fMet). The formyl group appears to play a dual role in the initiator identity of N-formylmethionyl-tRNA by promoting its recognition by IF2 and preventing the misappropriation of this tRNA by the elongation apparatus. This chain is Methionyl-tRNA formyltransferase, found in Thermosipho melanesiensis (strain DSM 12029 / CIP 104789 / BI429).